Reading from the N-terminus, the 1522-residue chain is ATP-binding cassette sub-family C member 3 (1522 aa).

Over 1–32 (MDRLCGSGELGSKFWDSNLTVYTNTPDLTPCF) the chain is Extracellular. The N-linked (GlcNAc...) asparagine glycan is linked to N18. Residues 33-53 (QNSLLAWVPCIYLWAALPCYL) form a helical membrane-spanning segment. The Cytoplasmic segment spans residues 54 to 73 (FYLRHHRLGYIVLSCLSRLK). A helical transmembrane segment spans residues 74–94 (TALGVLLWCISWVDLFYSFHG). The Extracellular portion of the chain corresponds to 95-99 (LVHGS). A helical transmembrane segment spans residues 100–120 (SPAPVFFITPLLVGITMLLAT). At 121-132 (LLIQYERLRGVR) the chain is on the cytoplasmic side. The chain crosses the membrane as a helical span at residues 133-153 (SSGVLIIFWLLCVICAIIPFR). At 154-171 (SKILLALAEGKILDPFRF) the chain is on the extracellular side. The helical transmembrane segment at 172 to 192 (TTFYIYFALVLCAFILSCFQE) threads the bilayer. The Cytoplasmic portion of the chain corresponds to 193–301 (KPPLFSPENL…KTKKPSFLRA (109 aa)). The helical transmembrane segment at 302 to 322 (LVRTFTSSLLMGACFKLIQDL) threads the bilayer. The ABC transmembrane type-1 1 domain occupies 310–592 (LLMGACFKLI…LPQLISGMTQ (283 aa)). Topologically, residues 323–347 (SPSSTHSCSASSSGLFRPHGPYWWG) are extracellular. Residues 348 to 368 (FLLAGLMFVSSTMQTLILHQH) traverse the membrane as a helical segment. The Cytoplasmic portion of the chain corresponds to 369–424 (YHCIFVMALRIRTAIIGVIYRKALTITNSVKREYTVGEMVNLMSVDAQRFMDVSPF). A helical transmembrane segment spans residues 425–445 (INLLWSAPLQVILAIYFLWQI). The Extracellular portion of the chain corresponds to 446-448 (LGP). The helical transmembrane segment at 449 to 469 (SALAGVAVIVLLIPLNGAVSM) threads the bilayer. Residues 470 to 531 (KMKTYQVQQM…LLRKGAYLQA (62 aa)) are Cytoplasmic-facing. Residues 532–552 (ISTFIWVCTPFMVTLITLGVY) traverse the membrane as a helical segment. At 553–574 (VCVDKNNVLDAEKAFVSLSLFN) the chain is on the extracellular side. The chain crosses the membrane as a helical span at residues 575–595 (ILKIPLNLLPQLISGMTQTSV). Topologically, residues 596–958 (SLKRIQDFLN…VKLSVYWDYA (363 aa)) are cytoplasmic. One can recognise an ABC transporter 1 domain in the interval 625–849 (ITIHNGTFSW…DGSFANFLRN (225 aa)). 659 to 666 (GPVGCGKS) contributes to the ATP binding site. S902 and S905 each carry phosphoserine. Residues 959–979 (KSVGLCTTLFICLLYAGQNAV) traverse the membrane as a helical segment. Residues 966-1247 (TLFICLLYAG…MIRTLSDLES (282 aa)) form the ABC transmembrane type-1 2 domain. Topologically, residues 980 to 1016 (AIGANVWLSAWTNDVEEHGQQNNTSVRLGVYATLGIL) are extracellular. N-linked (GlcNAc...) asparagine glycans are attached at residues N1001 and N1002. The helical transmembrane segment at 1017–1037 (QGLLVMLSAFTMVVGAIQAAR) threads the bilayer. Topologically, residues 1038–1080 (LLHTALLHNQIRAPQSFFDTTPSGRILNRFSKDIYVIHEVLAP) are cytoplasmic. Residues 1081 to 1101 (TILMLFNSFYTSISTIVVIVA) form a helical membrane-spanning segment. Residue S1102 is a topological domain, extracellular. A helical transmembrane segment spans residues 1103–1123 (TPLFCVVVLPLAVFYGFVQRF). The Cytoplasmic segment spans residues 1124–1194 (YVATSRQLKR…ASNRWLGVHV (71 aa)). Residues 1195 to 1215 (EFVGNCVVLFSALFAVIGRNS) form a helical membrane-spanning segment. Over 1216–1217 (LN) the chain is Extracellular. A helical transmembrane segment spans residues 1218 to 1238 (PGLVGLSVSYALQVTLSLNWM). The Cytoplasmic portion of the chain corresponds to 1239–1522 (IRTLSDLESN…YGMAKDAGLA (284 aa)). An ABC transporter 2 domain is found at 1286-1518 (FRNYSVRYRP…GGIFYGMAKD (233 aa)). An ATP-binding site is contributed by 1318–1325 (GRTGAGKS).

The protein belongs to the ABC transporter superfamily. ABCC family. Conjugate transporter (TC 3.A.1.208) subfamily. As to expression, expressed in lung, ileum, colon and liver. Higher in liver of Eisai hyperbilirubinemic rats.

The protein resides in the basolateral cell membrane. It is found in the basal cell membrane. The enzyme catalyses an S-substituted glutathione(in) + ATP + H2O = an S-substituted glutathione(out) + ADP + phosphate + H(+). The catalysed reaction is ATP + H2O + xenobioticSide 1 = ADP + phosphate + xenobioticSide 2.. It carries out the reaction taurocholate(in) + ATP + H2O = taurocholate(out) + ADP + phosphate + H(+). It catalyses the reaction glycocholate(in) + ATP + H2O = glycocholate(out) + ADP + phosphate + H(+). The enzyme catalyses taurolithocholate 3-sulfate(in) + ATP + H2O = taurolithocholate 3-sulfate(out) + ADP + phosphate + H(+). The catalysed reaction is 17beta-estradiol 17-O-(beta-D-glucuronate)(in) + ATP + H2O = 17beta-estradiol 17-O-(beta-D-glucuronate)(out) + ADP + phosphate + H(+). It carries out the reaction dehydroepiandrosterone 3-sulfate(in) + ATP + H2O = dehydroepiandrosterone 3-sulfate(out) + ADP + phosphate + H(+). It catalyses the reaction leukotriene C4(in) + ATP + H2O = leukotriene C4(out) + ADP + phosphate + H(+). The enzyme catalyses (4Z,15Z)-bilirubin IXalpha C8-beta-D-glucuronoside(in) + ATP + H2O = (4Z,15Z)-bilirubin IXalpha C8-beta-D-glucuronoside(out) + ADP + phosphate + H(+). The catalysed reaction is (4Z,15Z)-bilirubin IXalpha C8,C12-beta-D-bisglucuronoside(in) + ATP + H2O = (4Z,15Z)-bilirubin IXalpha C8,C12-beta-D-bisglucuronoside(out) + ADP + phosphate + H(+). It carries out the reaction taurochenodeoxycholate 3-sulfate(in) + ATP + H2O = taurochenodeoxycholate 3-sulfate(out) + ADP + phosphate + H(+). Functionally, ATP-dependent transporter of the ATP-binding cassette (ABC) family that binds and hydrolyzes ATP to enable active transport of various substrates including many drugs, toxicants and endogenous compound across cell membranes. Transports glucuronide conjugates such as bilirubin diglucuronide, estradiol-17-beta-o-glucuronide and GSH conjugates such as leukotriene C4 (LTC4). Transports also various bile salts (taurocholate, glycocholate, taurochenodeoxycholate-3-sulfate, taurolithocholate- 3-sulfate). Does not contribute substantially to bile salt physiology but provides an alternative route for the export of bile acids and glucuronides from cholestatic hepatocytes. May contribute to regulate the transport of organic compounds in testes across the blood-testis-barrier. The chain is ATP-binding cassette sub-family C member 3 (Abcc3) from Rattus norvegicus (Rat).